Reading from the N-terminus, the 419-residue chain is Tyrosine--tRNA ligase (419 aa).

Residue Tyr34 coordinates L-tyrosine. Positions 39–48 match the 'HIGH' region motif; it reads PTADSLHLGN. Tyr169 and Gln173 together coordinate L-tyrosine. A 'KMSKS' region motif is present at residues 229-233; it reads KFGKS. Lys232 provides a ligand contact to ATP. An S4 RNA-binding domain is found at 353–419; that stretch reads LTLIELLISA…GKKKNFVLTY (67 aa).

This sequence belongs to the class-I aminoacyl-tRNA synthetase family. TyrS type 1 subfamily. Homodimer.

The protein resides in the cytoplasm. The catalysed reaction is tRNA(Tyr) + L-tyrosine + ATP = L-tyrosyl-tRNA(Tyr) + AMP + diphosphate + H(+). Its function is as follows. Catalyzes the attachment of tyrosine to tRNA(Tyr) in a two-step reaction: tyrosine is first activated by ATP to form Tyr-AMP and then transferred to the acceptor end of tRNA(Tyr). The sequence is that of Tyrosine--tRNA ligase from Lactococcus lactis subsp. cremoris (strain SK11).